Here is an 88-residue protein sequence, read N- to C-terminus: Small ribosomal subunit protein bS20 (88 aa).

The protein belongs to the bacterial ribosomal protein bS20 family.

Binds directly to 16S ribosomal RNA. The chain is Small ribosomal subunit protein bS20 from Natranaerobius thermophilus (strain ATCC BAA-1301 / DSM 18059 / JW/NM-WN-LF).